The sequence spans 309 residues: Formimidoylglutamase (309 aa).

6 residues coordinate Mn(2+): histidine 120, aspartate 145, histidine 147, aspartate 149, aspartate 236, and aspartate 238.

Belongs to the arginase family. It depends on Mn(2+) as a cofactor.

It carries out the reaction N-formimidoyl-L-glutamate + H2O = formamide + L-glutamate. The protein operates within amino-acid degradation; L-histidine degradation into L-glutamate; L-glutamate from N-formimidoyl-L-glutamate (hydrolase route): step 1/1. Catalyzes the conversion of N-formimidoyl-L-glutamate to L-glutamate and formamide. This chain is Formimidoylglutamase, found in Chromobacterium violaceum (strain ATCC 12472 / DSM 30191 / JCM 1249 / CCUG 213 / NBRC 12614 / NCIMB 9131 / NCTC 9757 / MK).